We begin with the raw amino-acid sequence, 39 residues long: Hementin (39 aa).

The cofactor is a divalent metal cation. As to expression, expressed mainly in the posterior salivary glands and, to a lesser extent, in the anterior salivary glands and secreted into the proboscis (at protein level).

It localises to the secreted. With respect to regulation, inhibited by EDTA, cysteine, DTT and sodium phosphate. Partially inhibited by EGTA, citrate, Tris and glycine. Not inhibited by DFP, PMSF, iodoacetic acid and leupeptin. Requires sodium chloride concentrations higher than 0.15 M for activity. Metalloprotease with anticoagulant activity. Cleaves fibrinogen Aalpha (FGA), gamma (FGG) and Bbeta (FGB) chains after positions 'Asn-121', 'Lys-160' and 'Pro-102', respectively. Breaks down cross-linked and non-cross-linked fibrin clots. Prevents and reverts platelet aggregation induced by ADP and collagen. Prevents thrombin-induced platelet clotting. Does not affect plasma levels of coagulation factors prothrombin (F2), V (F5), VII (F7), VIII (F8), IX (F9), X (F10), XI (F11), XII (F12), plasma kallikrein (KLKB1) and kininogen-1 (KNG1). This Haementeria ghilianii (Amazon leech) protein is Hementin.